An 871-amino-acid chain; its full sequence is DNA mismatch repair protein MutS 1 (871 aa).

ATP is bound at residue 614 to 621; that stretch reads GPNMSGKS.

It belongs to the DNA mismatch repair MutS family.

This protein is involved in the repair of mismatches in DNA. It is possible that it carries out the mismatch recognition step. This protein has a weak ATPase activity. This chain is DNA mismatch repair protein MutS 1, found in Halobacterium salinarum (strain ATCC 29341 / DSM 671 / R1).